We begin with the raw amino-acid sequence, 233 residues long: Octanoyltransferase (233 aa).

Residues 36-211 form the BPL/LPL catalytic domain; the sequence is DTTPDEIWLV…EFTRQLGYPT (176 aa). Residues 75–82, 142–144, and 155–157 contribute to the substrate site; these read RGGQVTYH, SLG, and GLA. Cys173 acts as the Acyl-thioester intermediate in catalysis.

This sequence belongs to the LipB family.

It localises to the cytoplasm. The enzyme catalyses octanoyl-[ACP] + L-lysyl-[protein] = N(6)-octanoyl-L-lysyl-[protein] + holo-[ACP] + H(+). Its pathway is protein modification; protein lipoylation via endogenous pathway; protein N(6)-(lipoyl)lysine from octanoyl-[acyl-carrier-protein]: step 1/2. In terms of biological role, catalyzes the transfer of endogenously produced octanoic acid from octanoyl-acyl-carrier-protein onto the lipoyl domains of lipoate-dependent enzymes. Lipoyl-ACP can also act as a substrate although octanoyl-ACP is likely to be the physiological substrate. In Yersinia pestis bv. Antiqua (strain Antiqua), this protein is Octanoyltransferase.